The chain runs to 260 residues: Cytochrome c oxidase subunit 2 (260 aa).

The Mitochondrial intermembrane segment spans residues 1-41; it reads MIVREWLFFTMAPCDAAEPWQLGFQDAATPMMQGIIDLHHD. Residues 42–58 traverse the membrane as a helical segment; the sequence is IFFFLILILVFVSWILV. Topologically, residues 59–82 are mitochondrial matrix; that stretch reads RALWHFHYKKNPIPQRIVHGTTIE. Residues 83-104 traverse the membrane as a helical segment; the sequence is IIRTIFPSIILMFIAIPSFALL. The Mitochondrial intermembrane portion of the chain corresponds to 105–260; sequence YSMDEVVVDP…NQLIPQTGEA (156 aa). Residues histidine 187, cysteine 222, glutamate 224, cysteine 226, histidine 230, and methionine 233 each coordinate Cu cation. Residue glutamate 224 coordinates Mg(2+).

The protein belongs to the cytochrome c oxidase subunit 2 family. Component of the cytochrome c oxidase (complex IV, CIV), a multisubunit enzyme composed of a catalytic core of 3 subunits and several supernumerary subunits. The complex exists as a monomer or a dimer and forms supercomplexes (SCs) in the inner mitochondrial membrane with ubiquinol-cytochrome c oxidoreductase (cytochrome b-c1 complex, complex III, CIII). The cofactor is Cu cation.

It localises to the mitochondrion inner membrane. The catalysed reaction is 4 Fe(II)-[cytochrome c] + O2 + 8 H(+)(in) = 4 Fe(III)-[cytochrome c] + 2 H2O + 4 H(+)(out). Its function is as follows. Component of the cytochrome c oxidase, the last enzyme in the mitochondrial electron transport chain which drives oxidative phosphorylation. The respiratory chain contains 3 multisubunit complexes succinate dehydrogenase (complex II, CII), ubiquinol-cytochrome c oxidoreductase (cytochrome b-c1 complex, complex III, CIII) and cytochrome c oxidase (complex IV, CIV), that cooperate to transfer electrons derived from NADH and succinate to molecular oxygen, creating an electrochemical gradient over the inner membrane that drives transmembrane transport and the ATP synthase. Cytochrome c oxidase is the component of the respiratory chain that catalyzes the reduction of oxygen to water. Electrons originating from reduced cytochrome c in the intermembrane space (IMS) are transferred via the dinuclear copper A center (CU(A)) of subunit 2 and heme A of subunit 1 to the active site in subunit 1, a binuclear center (BNC) formed by heme A3 and copper B (CU(B)). The BNC reduces molecular oxygen to 2 water molecules using 4 electrons from cytochrome c in the IMS and 4 protons from the mitochondrial matrix. This Beta vulgaris (Sugar beet) protein is Cytochrome c oxidase subunit 2 (COX2).